We begin with the raw amino-acid sequence, 173 residues long: Large ribosomal subunit protein uL22c (173 aa).

It belongs to the universal ribosomal protein uL22 family. Part of the 50S ribosomal subunit.

The protein resides in the plastid. Its subcellular location is the chloroplast. This protein binds specifically to 23S rRNA. Its function is as follows. The globular domain of the protein is located near the polypeptide exit tunnel on the outside of the subunit, while an extended beta-hairpin is found that lines the wall of the exit tunnel in the center of the 70S ribosome. In Drimys granadensis, this protein is Large ribosomal subunit protein uL22c (rpl22).